A 362-amino-acid polypeptide reads, in one-letter code: Protein RecA (362 aa).

77–84 (GPESSGKT) contacts ATP.

It belongs to the RecA family.

Its subcellular location is the cytoplasm. Functionally, can catalyze the hydrolysis of ATP in the presence of single-stranded DNA, the ATP-dependent uptake of single-stranded DNA by duplex DNA, and the ATP-dependent hybridization of homologous single-stranded DNAs. It interacts with LexA causing its activation and leading to its autocatalytic cleavage. The polypeptide is Protein RecA (Allorhizobium ampelinum (strain ATCC BAA-846 / DSM 112012 / S4) (Agrobacterium vitis (strain S4))).